A 439-amino-acid polypeptide reads, in one-letter code: Mitochondrial distribution and morphology protein 12 (439 aa).

In terms of domain architecture, SMP-LTD spans 1–439 (MSIDVNWRSA…VYPSFWTFLI (439 aa)). The segment covering 70 to 85 (YEEDDDDHTSDASEEL) has biased composition (acidic residues). Disordered stretches follow at residues 70–102 (YEEDDDDHTSDASEELGSEHSSQWNRTHPELNE), 184–274 (SGWS…PPRM), and 353–386 (GSEQQQQQESAGDDHRPQSRPDSSASASQKRHGG). The span at 197–212 (GRSERHAGMKHQRAEP) shows a compositional bias: basic and acidic residues. Positions 215 to 230 (DTSNSTSRPSTANTLP) are enriched in polar residues. Over residues 231–240 (SHPSSSSKNS) the composition is skewed to low complexity. Over residues 247–261 (RNDHPSLHAGEHIED) the composition is skewed to basic and acidic residues.

It belongs to the MDM12 family. As to quaternary structure, component of the ER-mitochondria encounter structure (ERMES) or MDM complex, composed of mmm1, mdm10, mdm12 and mdm34. A mmm1 homodimer associates with one molecule of mdm12 on each side in a pairwise head-to-tail manner, and the SMP-LTD domains of mmm1 and mdm12 generate a continuous hydrophobic tunnel for phospholipid trafficking.

Its subcellular location is the mitochondrion outer membrane. It is found in the endoplasmic reticulum membrane. Functionally, component of the ERMES/MDM complex, which serves as a molecular tether to connect the endoplasmic reticulum (ER) and mitochondria. Components of this complex are involved in the control of mitochondrial shape and protein biogenesis, and function in nonvesicular lipid trafficking between the ER and mitochondria. Mdm12 is required for the interaction of the ER-resident membrane protein mmm1 and the outer mitochondrial membrane-resident beta-barrel protein mdm10. The mdm12-mmm1 subcomplex functions in the major beta-barrel assembly pathway that is responsible for biogenesis of all mitochondrial outer membrane beta-barrel proteins, and acts in a late step after the SAM complex. The mdm10-mdm12-mmm1 subcomplex further acts in the TOM40-specific pathway after the action of the mdm12-mmm1 complex. Essential for establishing and maintaining the structure of mitochondria and maintenance of mtDNA nucleoids. The protein is Mitochondrial distribution and morphology protein 12 of Neosartorya fischeri (strain ATCC 1020 / DSM 3700 / CBS 544.65 / FGSC A1164 / JCM 1740 / NRRL 181 / WB 181) (Aspergillus fischerianus).